Reading from the N-terminus, the 263-residue chain is Non-functional protein STAY-GREEN, chloroplastic (263 aa).

Residues 1–54 (MDTLTSAPLLTSKFKPSFSPQQKPCFPHRRRFENGKKKQSIVPVARLFGPAIFE) constitute a chloroplast transit peptide.

The protein belongs to the staygreen family.

It is found in the plastid. Its subcellular location is the chloroplast. In terms of biological role, non-functional protein probably interfering with the disassembling mechanism of the intact light-harvesting complex of photosystem II (LHCII) in the thylakoid membranes. Responsible for a stay-green phenotype. The chain is Non-functional protein STAY-GREEN, chloroplastic (SGR) from Pisum sativum (Garden pea).